We begin with the raw amino-acid sequence, 267 residues long: 3-methyl-2-oxobutanoate hydroxymethyltransferase (267 aa).

2 residues coordinate Mg(2+): Asp42 and Asp86. 3-methyl-2-oxobutanoate is bound by residues 42 to 43 (DS), Asp86, and Lys116. Glu118 contacts Mg(2+). Residue Glu185 is the Proton acceptor of the active site.

It belongs to the PanB family. As to quaternary structure, homodecamer; pentamer of dimers. Mg(2+) is required as a cofactor.

It is found in the cytoplasm. It carries out the reaction 3-methyl-2-oxobutanoate + (6R)-5,10-methylene-5,6,7,8-tetrahydrofolate + H2O = 2-dehydropantoate + (6S)-5,6,7,8-tetrahydrofolate. It participates in cofactor biosynthesis; (R)-pantothenate biosynthesis; (R)-pantoate from 3-methyl-2-oxobutanoate: step 1/2. Its function is as follows. Catalyzes the reversible reaction in which hydroxymethyl group from 5,10-methylenetetrahydrofolate is transferred onto alpha-ketoisovalerate to form ketopantoate. The polypeptide is 3-methyl-2-oxobutanoate hydroxymethyltransferase (Parasynechococcus marenigrum (strain WH8102)).